The sequence spans 273 residues: Dermonecrotic toxin LhSicTox-alphaIA1iii (273 aa).

The active site involves histidine 5. Residues glutamate 25 and aspartate 27 each contribute to the Mg(2+) site. Histidine 41 functions as the Nucleophile in the catalytic mechanism. Intrachain disulfides connect cysteine 45–cysteine 51 and cysteine 47–cysteine 190. Aspartate 85 contributes to the Mg(2+) binding site.

Belongs to the arthropod phospholipase D family. Class II subfamily. It depends on Mg(2+) as a cofactor. Expressed by the venom gland.

It is found in the secreted. The catalysed reaction is an N-(acyl)-sphingosylphosphocholine = an N-(acyl)-sphingosyl-1,3-cyclic phosphate + choline. It carries out the reaction an N-(acyl)-sphingosylphosphoethanolamine = an N-(acyl)-sphingosyl-1,3-cyclic phosphate + ethanolamine. It catalyses the reaction a 1-acyl-sn-glycero-3-phosphocholine = a 1-acyl-sn-glycero-2,3-cyclic phosphate + choline. The enzyme catalyses a 1-acyl-sn-glycero-3-phosphoethanolamine = a 1-acyl-sn-glycero-2,3-cyclic phosphate + ethanolamine. Dermonecrotic toxins cleave the phosphodiester linkage between the phosphate and headgroup of certain phospholipids (sphingolipid and lysolipid substrates), forming an alcohol (often choline) and a cyclic phosphate. This toxin acts on sphingomyelin (SM). It may also act on ceramide phosphoethanolamine (CPE), lysophosphatidylcholine (LPC) and lysophosphatidylethanolamine (LPE), but not on lysophosphatidylserine (LPS), and lysophosphatidylglycerol (LPG). It acts by transphosphatidylation, releasing exclusively cyclic phosphate products as second products. Induces dermonecrosis, hemolysis, increased vascular permeability, edema, inflammatory response, and platelet aggregation. In Loxosceles hirsuta (Recluse spider), this protein is Dermonecrotic toxin LhSicTox-alphaIA1iii.